We begin with the raw amino-acid sequence, 80 residues long: Myocilin opposite strand protein (80 aa).

A disordered region spans residues 53-80 (EQAPPPHRTYLTVPPAPPPSPAEDPTVS).

The chain is Myocilin opposite strand protein from Homo sapiens (Human).